Here is a 453-residue protein sequence, read N- to C-terminus: Pup--protein ligase (453 aa).

Mg(2+) is bound at residue Glu-9. Arg-53 provides a ligand contact to ATP. Tyr-55 is a binding site for Mg(2+). The Proton acceptor role is filled by Asp-57. Residue Glu-63 coordinates Mg(2+). Residues Thr-66 and Trp-420 each coordinate ATP.

Belongs to the Pup ligase/Pup deamidase family. Pup-conjugating enzyme subfamily.

It carries out the reaction ATP + [prokaryotic ubiquitin-like protein]-L-glutamate + [protein]-L-lysine = ADP + phosphate + N(6)-([prokaryotic ubiquitin-like protein]-gamma-L-glutamyl)-[protein]-L-lysine.. It functions in the pathway protein degradation; proteasomal Pup-dependent pathway. It participates in protein modification; protein pupylation. Functionally, catalyzes the covalent attachment of the prokaryotic ubiquitin-like protein modifier Pup to the proteasomal substrate proteins, thereby targeting them for proteasomal degradation. This tagging system is termed pupylation. The ligation reaction involves the side-chain carboxylate of the C-terminal glutamate of Pup and the side-chain amino group of a substrate lysine. The polypeptide is Pup--protein ligase (Streptomyces avermitilis (strain ATCC 31267 / DSM 46492 / JCM 5070 / NBRC 14893 / NCIMB 12804 / NRRL 8165 / MA-4680)).